Consider the following 567-residue polypeptide: Laccase-7 (567 aa).

Positions 1-23 (MEGVRVPIACALILLAISSITSA) are cleaved as a signal peptide. Plastocyanin-like domains follow at residues 31 to 147 (NVQN…PKSG) and 157 to 310 (KEVP…YGGA). N-linked (GlcNAc...) asparagine glycosylation is found at Asn-34, Asn-50, and Asn-77. 2 residues coordinate Cu cation: His-81 and His-83. The N-linked (GlcNAc...) asparagine glycan is linked to Asn-115. Cu cation is bound by residues His-126 and His-128. Asn-186, Asn-298, Asn-339, Asn-374, Asn-386, Asn-427, and Asn-450 each carry an N-linked (GlcNAc...) asparagine glycan. Positions 412–551 (DFPDQPPVKF…GMIFVVKNGP (140 aa)) constitute a Plastocyanin-like 3 domain. Cu cation-binding residues include His-468, His-471, His-473, His-530, Cys-531, His-532, and His-536.

Belongs to the multicopper oxidase family. It depends on Cu cation as a cofactor. As to expression, predominantly expressed in tissues other than the inflorescence stem.

It is found in the secreted. The protein localises to the extracellular space. The protein resides in the apoplast. The catalysed reaction is 4 hydroquinone + O2 = 4 benzosemiquinone + 2 H2O. Lignin degradation and detoxification of lignin-derived products. The chain is Laccase-7 (LAC7) from Arabidopsis thaliana (Mouse-ear cress).